The chain runs to 491 residues: MTDLTSFSAAELAGLVARGESSAVEVTQAHLDRISAVDDRVHAFLHVDTEGALDAARDVDSRRAAGEPLGPLAGVPVAVKDVLTTKGVPTTAGSKILADWRPPYDSTIVRRLRAAGTVMLGKTNMDEFAMGSSTEYSAFGPTHNPWDLSRIPGGSGGGSSAALAAYETPLSIGSDTGGSIRQPGAVTGTVGVKPTYGGTSRYGLVAFSSSLDTPGPCARTVLDAALLHEVIGGHDPLDSTSIPAPVPDVVAAARLGASGDLTGVRLGVVREFAGEGAEPGVLAAFHAAVETLTKLGAEVVEVSCPHFQYALPAYYLIAPSECSSNLARFDGVRFGLRVGDDGIRSLEEVMSATREAGFGPEVKRRVMLGTYALSSGYYDAYYGQAQKVRTLISRDFTTAFEQVDALISPTTPFVAFPVGARTADPYQMYLADLFTIPSNLYGGPGISVPCGLADGLPVGLQVMAPTMADDRMYRVAAALESVVGPFTPPAL.

Active-site charge relay system residues include lysine 80 and serine 155. Serine 179 acts as the Acyl-ester intermediate in catalysis.

It belongs to the amidase family. GatA subfamily. As to quaternary structure, heterotrimer of A, B and C subunits.

It carries out the reaction L-glutamyl-tRNA(Gln) + L-glutamine + ATP + H2O = L-glutaminyl-tRNA(Gln) + L-glutamate + ADP + phosphate + H(+). In terms of biological role, allows the formation of correctly charged Gln-tRNA(Gln) through the transamidation of misacylated Glu-tRNA(Gln) in organisms which lack glutaminyl-tRNA synthetase. The reaction takes place in the presence of glutamine and ATP through an activated gamma-phospho-Glu-tRNA(Gln). This is Glutamyl-tRNA(Gln) amidotransferase subunit A from Salinispora tropica (strain ATCC BAA-916 / DSM 44818 / JCM 13857 / NBRC 105044 / CNB-440).